The chain runs to 218 residues: uncharacterized protein (218 aa).

H57, H59, D61, H62, H138, D158, and H199 together coordinate Zn(2+).

The protein belongs to the metallo-beta-lactamase superfamily. Glyoxalase II family. Zn(2+) serves as cofactor.

This is an uncharacterized protein from Mycobacterium leprae (strain TN).